A 301-amino-acid chain; its full sequence is NAD kinase 2 (301 aa).

Asp77 acts as the Proton acceptor in catalysis. Residues 77–78, Arg82, 151–152, Lys162, Asp181, and 192–197 contribute to the NAD(+) site; these read DG, NE, and TAYAFS.

This sequence belongs to the NAD kinase family. A divalent metal cation serves as cofactor.

Its subcellular location is the cytoplasm. The enzyme catalyses NAD(+) + ATP = ADP + NADP(+) + H(+). In terms of biological role, involved in the regulation of the intracellular balance of NAD and NADP, and is a key enzyme in the biosynthesis of NADP. Catalyzes specifically the phosphorylation on 2'-hydroxyl of the adenosine moiety of NAD to yield NADP. This is NAD kinase 2 from Streptomyces coelicolor (strain ATCC BAA-471 / A3(2) / M145).